The chain runs to 370 residues: Anhydro-N-acetylmuramic acid kinase (370 aa).

An ATP-binding site is contributed by Gly13 to Asp20.

Belongs to the anhydro-N-acetylmuramic acid kinase family.

The catalysed reaction is 1,6-anhydro-N-acetyl-beta-muramate + ATP + H2O = N-acetyl-D-muramate 6-phosphate + ADP + H(+). It functions in the pathway amino-sugar metabolism; 1,6-anhydro-N-acetylmuramate degradation. Its pathway is cell wall biogenesis; peptidoglycan recycling. Its function is as follows. Catalyzes the specific phosphorylation of 1,6-anhydro-N-acetylmuramic acid (anhMurNAc) with the simultaneous cleavage of the 1,6-anhydro ring, generating MurNAc-6-P. Is required for the utilization of anhMurNAc either imported from the medium or derived from its own cell wall murein, and thus plays a role in cell wall recycling. This Vibrio cholerae serotype O1 (strain ATCC 39315 / El Tor Inaba N16961) protein is Anhydro-N-acetylmuramic acid kinase.